We begin with the raw amino-acid sequence, 108 residues long: UPF0060 membrane protein YnfA (108 aa).

Residues 1-5 (MIKTT) lie on the Periplasmic side of the membrane. A helical membrane pass occupies residues 6 to 26 (LLFFATALCEIIGCFLPWLWL). At 27 to 30 (KRNA) the chain is on the cytoplasmic side. The helical transmembrane segment at 31–51 (SIWLLLPAGISLALFVWLLTL) threads the bilayer. Topologically, residues 52–60 (HPAASGRIY) are periplasmic. The chain crosses the membrane as a helical span at residues 61–81 (AAYGGVYVCTALMWLRVVDGV). The Cytoplasmic portion of the chain corresponds to 82–84 (KLT). Residues 85 to 105 (LYDWTGALIALCGMLIIVAGW) form a helical membrane-spanning segment. Residues 106–108 (GRT) lie on the Periplasmic side of the membrane.

It belongs to the UPF0060 family.

It is found in the cell inner membrane. This is UPF0060 membrane protein YnfA from Shigella dysenteriae serotype 1 (strain Sd197).